The sequence spans 426 residues: Glutamate-1-semialdehyde 2,1-aminomutase (426 aa).

Lysine 265 is subject to N6-(pyridoxal phosphate)lysine.

Belongs to the class-III pyridoxal-phosphate-dependent aminotransferase family. HemL subfamily. Homodimer. Requires pyridoxal 5'-phosphate as cofactor.

The protein resides in the cytoplasm. It carries out the reaction (S)-4-amino-5-oxopentanoate = 5-aminolevulinate. It participates in porphyrin-containing compound metabolism; protoporphyrin-IX biosynthesis; 5-aminolevulinate from L-glutamyl-tRNA(Glu): step 2/2. The protein is Glutamate-1-semialdehyde 2,1-aminomutase of Salmonella schwarzengrund (strain CVM19633).